The following is a 317-amino-acid chain: Beta-ketoacyl-[acyl-carrier-protein] synthase III (317 aa).

Catalysis depends on residues Cys112 and His244. The segment at 245–249 (QANVR) is ACP-binding. Residue Asn274 is part of the active site.

This sequence belongs to the thiolase-like superfamily. FabH family. Homodimer.

It is found in the cytoplasm. It catalyses the reaction malonyl-[ACP] + acetyl-CoA + H(+) = 3-oxobutanoyl-[ACP] + CO2 + CoA. It participates in lipid metabolism; fatty acid biosynthesis. Catalyzes the condensation reaction of fatty acid synthesis by the addition to an acyl acceptor of two carbons from malonyl-ACP. Catalyzes the first condensation reaction which initiates fatty acid synthesis and may therefore play a role in governing the total rate of fatty acid production. Possesses both acetoacetyl-ACP synthase and acetyl transacylase activities. Its substrate specificity determines the biosynthesis of branched-chain and/or straight-chain of fatty acids. The polypeptide is Beta-ketoacyl-[acyl-carrier-protein] synthase III (Rickettsia bellii (strain OSU 85-389)).